We begin with the raw amino-acid sequence, 386 residues long: Cobalt-precorrin-5B C(1)-methyltransferase (386 aa).

It belongs to the CbiD family.

The catalysed reaction is Co-precorrin-5B + S-adenosyl-L-methionine = Co-precorrin-6A + S-adenosyl-L-homocysteine. It participates in cofactor biosynthesis; adenosylcobalamin biosynthesis; cob(II)yrinate a,c-diamide from sirohydrochlorin (anaerobic route): step 6/10. Catalyzes the methylation of C-1 in cobalt-precorrin-5B to form cobalt-precorrin-6A. The protein is Cobalt-precorrin-5B C(1)-methyltransferase of Prochlorococcus marinus (strain MIT 9303).